A 268-amino-acid polypeptide reads, in one-letter code: Phosphatidylglycerol--prolipoprotein diacylglyceryl transferase (268 aa).

A run of 7 helical transmembrane segments spans residues 23 to 43, 62 to 82, 97 to 117, 132 to 152, 179 to 199, 206 to 226, and 241 to 261; these read IGLR…RWLA, LLFN…VFFY, VWEG…AMIW, FVAP…FINL, SQLY…NIFI, ASVA…VEYV, and GQAL…WAYS. A 1,2-diacyl-sn-glycero-3-phospho-(1'-sn-glycerol) is bound at residue R145.

This sequence belongs to the Lgt family.

The protein localises to the cell inner membrane. It carries out the reaction L-cysteinyl-[prolipoprotein] + a 1,2-diacyl-sn-glycero-3-phospho-(1'-sn-glycerol) = an S-1,2-diacyl-sn-glyceryl-L-cysteinyl-[prolipoprotein] + sn-glycerol 1-phosphate + H(+). It participates in protein modification; lipoprotein biosynthesis (diacylglyceryl transfer). In terms of biological role, catalyzes the transfer of the diacylglyceryl group from phosphatidylglycerol to the sulfhydryl group of the N-terminal cysteine of a prolipoprotein, the first step in the formation of mature lipoproteins. The chain is Phosphatidylglycerol--prolipoprotein diacylglyceryl transferase from Haemophilus influenzae (strain 86-028NP).